A 418-amino-acid polypeptide reads, in one-letter code: Glutamyl-tRNA reductase (418 aa).

Residues 49–52, serine 109, 114–116, and glutamine 120 contribute to the substrate site; these read TCNR and EPQ. The active-site Nucleophile is cysteine 50. 189–194 is an NADP(+) binding site; it reads GAGETI.

The protein belongs to the glutamyl-tRNA reductase family. In terms of assembly, homodimer.

The catalysed reaction is (S)-4-amino-5-oxopentanoate + tRNA(Glu) + NADP(+) = L-glutamyl-tRNA(Glu) + NADPH + H(+). It participates in porphyrin-containing compound metabolism; protoporphyrin-IX biosynthesis; 5-aminolevulinate from L-glutamyl-tRNA(Glu): step 1/2. Its function is as follows. Catalyzes the NADPH-dependent reduction of glutamyl-tRNA(Glu) to glutamate 1-semialdehyde (GSA). The protein is Glutamyl-tRNA reductase of Salmonella dublin (strain CT_02021853).